Reading from the N-terminus, the 1175-residue chain is Phospholipid-transporting ATPase IF (1175 aa).

The next 4 helical transmembrane spans lie at 69–89, 91–111, 287–307, and 338–358; these read FYFLIIFLVQLMIDTPTSPIT, GLPLFFVITVTAIKQGYEDWL, NTFLIIYLIILISEAIISTIL, and FISDFLAFLVLYNFIIPISLY. Aspartate 407 functions as the 4-aspartylphosphate intermediate in the catalytic mechanism. Positions 407, 408, 409, 530, 571, 594, 625, 705, 706, 707, 793, and 799 each coordinate ATP. Aspartate 407 serves as a coordination point for Mg(2+). Residue threonine 409 coordinates Mg(2+). Aspartate 820 contributes to the Mg(2+) binding site. Residues asparagine 823 and aspartate 824 each contribute to the ATP site. Mg(2+) is bound at residue aspartate 824. A run of 6 helical transmembrane segments spans residues 862–882, 910–930, 963–983, 994–1014, 1033–1053, and 1060–1080; these read LLFVHGHFYYIRIATLVQYFF, VYLTLYNICFTSLPVLIYSLV, WTVLGFSHAFIFFFGSYFLVG, MFGNWTFGTLVFTVMVITVTV, GSIIFYFIFSLFYGGILWPFL, and FVFIQLLSSGSAWFAILLMVV.

Belongs to the cation transport ATPase (P-type) (TC 3.A.3) family. Type IV subfamily. As to quaternary structure, component of a P4-ATPase flippase complex which consists of a catalytic alpha subunit ATP11B and an accessory beta subunit TMEM30A. Mg(2+) is required as a cofactor. As to expression, expressed in retina, brain, liver, testes and kidney (at protein level).

It is found in the recycling endosome membrane. Its subcellular location is the early endosome. It localises to the endoplasmic reticulum. The protein resides in the golgi apparatus. The protein localises to the trans-Golgi network. It carries out the reaction ATP + H2O + phospholipidSide 1 = ADP + phosphate + phospholipidSide 2.. The enzyme catalyses a 1,2-diacyl-sn-glycero-3-phospho-L-serine(out) + ATP + H2O = a 1,2-diacyl-sn-glycero-3-phospho-L-serine(in) + ADP + phosphate + H(+). The catalysed reaction is a 1,2-diacyl-sn-glycero-3-phosphoethanolamine(out) + ATP + H2O = a 1,2-diacyl-sn-glycero-3-phosphoethanolamine(in) + ADP + phosphate + H(+). Its function is as follows. Catalytic component of a P4-ATPase flippase complex which catalyzes the hydrolysis of ATP coupled to the transport of aminophospholipids, phosphatidylserines (PS) and phosphatidylethanolamines (PE), from the outer to the inner leaflet of intracellular membranes. May contribute to the maintenance of membrane lipid asymmetry in endosome compartment. This is Phospholipid-transporting ATPase IF from Mus musculus (Mouse).